A 450-amino-acid chain; its full sequence is MSHGHSHDGAPCGGHHGDDGAGGSRPSVNDVQALVDQLRLAGVDVSNMPNIPTAPRDMDEARSKSFQFWSTQPVPQMDETVPADVNCAIEENIALDKVRAEPFSLPAGFRWSNVDLSDEEQLNELYNLLTRNYVEDDDSMFRFDYSADFLKWALQVPGFRPEWHCGVRADSNNRLLAFIGAVPQTVRVYDKTVNMVEINFLCVHKNLRSRRVAPVLIREITRRVNVTGIFQAAFTAGIVIPKPVSVCRYYHRSLNPRKLIDVRFSHLSAKMTMARTIKLYKLPEETATRNLREMKSTDVPQVFKLLTTSLKQYSLAPVYNSEEELAHALVPKKGVVYSYVAENQNGKITDFVSFYSLPSTVMGHTTHKTIYAAYLYYYVAGSVTPKQLINDSLILANREKFDVFNALDLMHNEKIFSDLKFGKGDGNLQYYLYNWKCADMKPSQIGLVLQ.

Positions 1–28 (MSHGHSHDGAPCGGHHGDDGAGGSRPSV) are disordered. The tetradecanoyl-CoA site is built by Q67, F68, W69, F200, L201, C202, V203, S209, R211, V212, and A213.

The protein belongs to the NMT family.

The protein localises to the cytoplasm. The enzyme catalyses N-terminal glycyl-[protein] + tetradecanoyl-CoA = N-tetradecanoylglycyl-[protein] + CoA + H(+). Adds a myristoyl group to the N-terminal glycine residue of certain cellular proteins. This chain is Probable glycylpeptide N-tetradecanoyltransferase (nmt-1), found in Caenorhabditis elegans.